The following is a 212-amino-acid chain: Prolactin (212 aa).

The N-terminal stretch at 1 to 26 (MARCCKCPRLHLAVTVLACVLVFTEG) is a signal peptide. Intrachain disulfides connect cysteine 71–cysteine 185 and cysteine 202–cysteine 212.

The protein belongs to the somatotropin/prolactin family. Pituitary gland.

Its subcellular location is the secreted. This is Prolactin (prl) from Ictalurus punctatus (Channel catfish).